The primary structure comprises 80 residues: Conotoxin PnMKLT1-0121 (80 aa).

The signal sequence occupies residues 1–22 (MKLTCMMIVAVLFLTAWTFATA). The propeptide occupies 23-49 (DDPRNRLENFFSKTQHEMKNPEASKLN). 3 cysteine pairs are disulfide-bonded: Cys-52-Cys-67, Cys-59-Cys-71, and Cys-66-Cys-75.

Belongs to the conotoxin O1 superfamily. Expressed by the venom duct.

It is found in the secreted. The polypeptide is Conotoxin PnMKLT1-0121 (Conus pennaceus (Feathered cone)).